Here is a 354-residue protein sequence, read N- to C-terminus: Methionine import ATP-binding protein MetN (354 aa).

Positions 8 to 250 constitute an ABC transporter domain; it reads LDHIDITFHQ…PREDLTKDFI (243 aa). 42 to 49 provides a ligand contact to ATP; sequence GYSGAGKS.

It belongs to the ABC transporter superfamily. Methionine importer (TC 3.A.1.24) family. As to quaternary structure, the complex is composed of two ATP-binding proteins (MetN), two transmembrane proteins (MetI) and a solute-binding protein (MetQ).

The protein localises to the cell membrane. It catalyses the reaction L-methionine(out) + ATP + H2O = L-methionine(in) + ADP + phosphate + H(+). The enzyme catalyses D-methionine(out) + ATP + H2O = D-methionine(in) + ADP + phosphate + H(+). In terms of biological role, part of the ABC transporter complex MetNIQ involved in methionine import. Responsible for energy coupling to the transport system. This chain is Methionine import ATP-binding protein MetN, found in Streptococcus mutans serotype c (strain ATCC 700610 / UA159).